The primary structure comprises 237 residues: Large ribosomal subunit protein uL1 (237 aa).

Belongs to the universal ribosomal protein uL1 family. As to quaternary structure, part of the 50S ribosomal subunit.

Its function is as follows. Binds directly to 23S rRNA. The L1 stalk is quite mobile in the ribosome, and is involved in E site tRNA release. Functionally, protein L1 is also a translational repressor protein, it controls the translation of the L11 operon by binding to its mRNA. The polypeptide is Large ribosomal subunit protein uL1 (Chloroflexus aggregans (strain MD-66 / DSM 9485)).